Reading from the N-terminus, the 616-residue chain is Probable Xaa-Pro aminopeptidase P (616 aa).

Residues aspartate 413, aspartate 424, glutamate 522, and glutamate 536 each contribute to the Mn(2+) site.

It belongs to the peptidase M24B family. Mn(2+) serves as cofactor.

The catalysed reaction is Release of any N-terminal amino acid, including proline, that is linked to proline, even from a dipeptide or tripeptide.. Its function is as follows. Catalyzes the removal of a penultimate prolyl residue from the N-termini of peptides. This Paracoccidioides brasiliensis (strain Pb18) protein is Probable Xaa-Pro aminopeptidase P (AMPP).